The sequence spans 335 residues: GTPase Obg (335 aa).

The 159-residue stretch at 1–159 folds into the Obg domain; the sequence is MKFVDSASIR…REIGLELSIM (159 aa). Positions 160-332 constitute an OBG-type G domain; that stretch reads ADIGLLGMPN…LVAGLFKLVK (173 aa). Residues 166–173, 191–195, 212–215, 282–285, and 313–315 contribute to the GTP site; these read GMPNAGKS, FTTLH, DIPG, NKMD, and SAL. Ser-173 and Thr-193 together coordinate Mg(2+).

It belongs to the TRAFAC class OBG-HflX-like GTPase superfamily. OBG GTPase family. In terms of assembly, monomer. Mg(2+) serves as cofactor.

It localises to the cytoplasm. Its function is as follows. An essential GTPase which binds GTP, GDP and possibly (p)ppGpp with moderate affinity, with high nucleotide exchange rates and a fairly low GTP hydrolysis rate. Plays a role in control of the cell cycle, stress response, ribosome biogenesis and in those bacteria that undergo differentiation, in morphogenesis control. The sequence is that of GTPase Obg from Ruthia magnifica subsp. Calyptogena magnifica.